The chain runs to 87 residues: CRISPR-associated endoribonuclease Cas2 (87 aa).

Asp8 lines the Mg(2+) pocket.

Belongs to the CRISPR-associated endoribonuclease Cas2 protein family. As to quaternary structure, homodimer, forms a heterotetramer with a Cas1 homodimer. The cofactor is Mg(2+).

Functionally, CRISPR (clustered regularly interspaced short palindromic repeat), is an adaptive immune system that provides protection against mobile genetic elements (viruses, transposable elements and conjugative plasmids). CRISPR clusters contain sequences complementary to antecedent mobile elements and target invading nucleic acids. CRISPR clusters are transcribed and processed into CRISPR RNA (crRNA). Functions as a ssRNA-specific endoribonuclease. Involved in the integration of spacer DNA into the CRISPR cassette. The chain is CRISPR-associated endoribonuclease Cas2 from Frankia alni (strain DSM 45986 / CECT 9034 / ACN14a).